Consider the following 159-residue polypeptide: Cyclic pyranopterin monophosphate synthase (159 aa).

Substrate is bound by residues 75-77 and 113-114; these read LCH and ME. Residue Asp128 is part of the active site.

The protein belongs to the MoaC family. As to quaternary structure, homohexamer; trimer of dimers.

It carries out the reaction (8S)-3',8-cyclo-7,8-dihydroguanosine 5'-triphosphate = cyclic pyranopterin phosphate + diphosphate. It participates in cofactor biosynthesis; molybdopterin biosynthesis. Functionally, catalyzes the conversion of (8S)-3',8-cyclo-7,8-dihydroguanosine 5'-triphosphate to cyclic pyranopterin monophosphate (cPMP). This Cereibacter sphaeroides (strain ATCC 17023 / DSM 158 / JCM 6121 / CCUG 31486 / LMG 2827 / NBRC 12203 / NCIMB 8253 / ATH 2.4.1.) (Rhodobacter sphaeroides) protein is Cyclic pyranopterin monophosphate synthase.